The chain runs to 164 residues: V-type proton ATPase subunit c' (164 aa).

At methionine 1–tyrosine 14 the chain is on the vacuolar side. Residues alanine 15 to glycine 37 form a helical membrane-spanning segment. The Cytoplasmic portion of the chain corresponds to threonine 38–serine 59. The helical transmembrane segment at leucine 60–isoleucine 80 threads the bilayer. Residues alanine 81–histidine 98 lie on the Vacuolar side of the membrane. Residues leucine 99–glycine 120 form a helical membrane-spanning segment. The Cytoplasmic portion of the chain corresponds to aspartate 121–arginine 132. A helical transmembrane segment spans residues leucine 133–leucine 158. The Vacuolar segment spans residues asparagine 159–glutamate 164.

This sequence belongs to the V-ATPase proteolipid subunit family. As to quaternary structure, V-ATPase is a heteromultimeric enzyme composed of a peripheral catalytic V1 complex (components A to H) attached to an integral membrane V0 proton pore complex (components: a, c, c', c'', d, e, f and VOA1). The decameric c-ring forms the proton-conducting pore, and is composed of eight proteolipid subunits c, one subunit c' and one subunit c''.

The protein localises to the vacuole membrane. In terms of biological role, proton-conducting pore forming subunit of the V0 complex of vacuolar(H+)-ATPase (V-ATPase), a multisubunit enzyme composed of a peripheral complex (V1) that hydrolyzes ATP and a membrane integral complex (V0) that translocates protons. V-ATPase is responsible for acidifying and maintaining the pH of intracellular compartments. This Saccharomyces cerevisiae (strain ATCC 204508 / S288c) (Baker's yeast) protein is V-type proton ATPase subunit c' (VMA11).